Here is a 288-residue protein sequence, read N- to C-terminus: G1/S-specific cyclin-D2 (288 aa).

The Cyclin N-terminal domain occupies 26–151 (VLQNLLTIEE…VVLGKLKWNL (126 aa)). Residues 264 to 288 (DQDGSKSEDELDQASTPTDVRDIDL) are disordered. Ser270 is subject to Phosphoserine. A Phosphothreonine modification is found at Thr279.

It belongs to the cyclin family. Cyclin D subfamily. As to quaternary structure, interacts with either CDK4 or CDK6 protein kinase to form a serine/threonine kinase holoenzyme complex. The cyclin subunit imparts substrate specificity to the complex. In terms of processing, phosphorylation at Thr-279 by MAP kinases is required for ubiquitination and degradation by the DCX(AMBRA1) complex. Post-translationally, ubiquitinated by the DCX(AMBRA1) complex during the transition from G1 to S cell phase, leading to its degradation: ubiquitination is dependent on Thr-279 phosphorylation. The DCX(AMBRA1) complex represents the major regulator of CCND2 stability during the G1/S transition. Polyubiquitinated by the SCF(FBXL2) complex, leading to proteasomal degradation.

It is found in the nucleus. The protein resides in the cytoplasm. The protein localises to the nucleus membrane. Regulatory component of the cyclin D2-CDK4 (DC) complex that phosphorylates and inhibits members of the retinoblastoma (RB) protein family including RB1 and regulates the cell-cycle during G(1)/S transition. Phosphorylation of RB1 allows dissociation of the transcription factor E2F from the RB/E2F complex and the subsequent transcription of E2F target genes which are responsible for the progression through the G(1) phase. Hypophosphorylates RB1 in early G(1) phase. Cyclin D-CDK4 complexes are major integrators of various mitogenenic and antimitogenic signals. This chain is G1/S-specific cyclin-D2 (CCND2), found in Sus scrofa (Pig).